The chain runs to 235 residues: (5-formylfuran-3-yl)methyl phosphate synthase (235 aa).

Catalysis depends on Lys27, which acts as the Schiff-base intermediate with substrate. Residue Lys85 is the Proton acceptor of the active site.

Belongs to the MfnB family. As to quaternary structure, homohexamer. Trimer of dimers.

It catalyses the reaction 2 D-glyceraldehyde 3-phosphate = 4-(hydroxymethyl)-2-furancarboxaldehyde phosphate + phosphate + 2 H2O. The protein operates within cofactor biosynthesis; methanofuran biosynthesis. In terms of biological role, catalyzes the formation of 4-(hydroxymethyl)-2-furancarboxaldehyde phosphate (4-HFC-P) from two molecules of glyceraldehyde-3-P (GA-3-P). The chain is (5-formylfuran-3-yl)methyl phosphate synthase from Methanocaldococcus jannaschii (strain ATCC 43067 / DSM 2661 / JAL-1 / JCM 10045 / NBRC 100440) (Methanococcus jannaschii).